Reading from the N-terminus, the 755-residue chain is MTISPPEREPKVRVVVDNDPVPTSFEKWAKPGHFDRTLARGPQTTTWIWNLHALAHDFDTHTSDLEDISRKIFSAHFGHLAVVFIWLSGMYFHGAKFSNYEAWLADPTGIKPSAQVVWPIVGQGILNGDVGGGFHGIQITSGLFQLWRASGITNEFQLYCTAIGGLVMAGLMLFAGWFHYHKRAPKLEWFQNVESMLNHHLAGLLGLGSLSWAGHQIHVSLPINKLLDAGVAAKDIPLPHEFILNPSLMAELYPKVDWGFFSGVIPFFTFNWAAYSDFLTFNGGLNPVTGGLWLSDTAHHHLAIAVLFIIAGHMYRTNWGIGHSLKEILEAHKGPFTGAGHKGLYEVLTTSWHAQLAINLAMMGSLSIIVAQHMYAMPPYPYLATDYPTQLSLFTHHMWIGGFLVVGGAAHGAIFMVRDYDPAMNQNNVLDRVLRHRDAIISHLNWVCIFLGFHSFGLYVHNDTMRAFGRPQDMFSDTGIQLQPVFAQWVQNLHTLAPGGTAPNAAATASVAFGGDVVAVGGKVAMMPIVLGTADFMVHHIHAFTIHVTVLILLKGVLFARSSRLIPDKANLGFRFPCDGPGRGGTCQVSGWDHVFLGLFWMYNCISVVIFHFSWKMQSDVWGTVAPDGTVSHITGGNFAQSAITINGWLRDFLWAQASQVIGSYGSALSAYGLLFLGAHFIWAFSLMFLFSGRGYWQELIESIVWAHNKLKVAPAIQPRALSIIQGRAVGVAHYLLGGIATTWAFFLARIISVG.

Helical transmembrane passes span 72 to 95 (IFSA…FHGA), 158 to 181 (LYCT…FHYH), 197 to 221 (LNHH…HVSL), 297 to 315 (TAHH…GHMY), 352 to 375 (WHAQ…QHMY), 391 to 417 (LSLF…IFMV), 439 to 461 (AIIS…LYVH), and 536 to 554 (FMVH…LILL). Residues C578 and C587 each contribute to the [4Fe-4S] cluster site. The next 2 helical transmembrane spans lie at 594–615 (HVFL…HFSW) and 669–691 (LSAY…MFLF). H680 lines the chlorophyll a' pocket. Residues M688 and Y696 each contribute to the chlorophyll a site. W697 contacts phylloquinone. The helical transmembrane segment at 729-749 (AVGVAHYLLGGIATTWAFFLA) threads the bilayer.

The protein belongs to the PsaA/PsaB family. In terms of assembly, the PsaA/B heterodimer binds the P700 chlorophyll special pair and subsequent electron acceptors. PSI consists of a core antenna complex that captures photons, and an electron transfer chain that converts photonic excitation into a charge separation. The cyanobacterial PSI reaction center is composed of one copy each of PsaA,B,C,D,E,F,I,J,K,L,M and X, and forms trimeric complexes. The cofactor is PSI electron transfer chain: 5 chlorophyll a, 1 chlorophyll a', 2 phylloquinones and 3 4Fe-4S clusters. PSI core antenna: 90 chlorophyll a, 22 carotenoids, 3 phospholipids and 1 galactolipid. P700 is a chlorophyll a/chlorophyll a' dimer, A0 is one or more chlorophyll a, A1 is one or both phylloquinones and FX is a shared 4Fe-4S iron-sulfur center..

Its subcellular location is the cellular thylakoid membrane. It carries out the reaction reduced [plastocyanin] + hnu + oxidized [2Fe-2S]-[ferredoxin] = oxidized [plastocyanin] + reduced [2Fe-2S]-[ferredoxin]. Functionally, psaA and PsaB bind P700, the primary electron donor of photosystem I (PSI), as well as the electron acceptors A0, A1 and FX. PSI is a plastocyanin/cytochrome c6-ferredoxin oxidoreductase, converting photonic excitation into a charge separation, which transfers an electron from the donor P700 chlorophyll pair to the spectroscopically characterized acceptors A0, A1, FX, FA and FB in turn. Oxidized P700 is reduced on the lumenal side of the thylakoid membrane by plastocyanin or cytochrome c6. The sequence is that of Photosystem I P700 chlorophyll a apoprotein A1 from Thermostichus vulcanus (Synechococcus vulcanus).